The primary structure comprises 639 residues: Uridine permease (639 aa).

The tract at residues 1–37 is disordered; the sequence is MPVSDSGFDNSSKTMKDDTIPTEDYEEITKESEMGDA. Residues 1–162 lie on the Cytoplasmic side of the membrane; that stretch reads MPVSDSGFDN…LQLGLNWWQT (162 aa). Phosphothreonine is present on Thr-54. Ser-56 carries the phosphoserine modification. Residues 163-180 traverse the membrane as a helical segment; it reads WICIWVGYTFVAFFLILG. Residues 181 to 200 lie on the Extracellular side of the membrane; sequence SKVGNNYHISFPISSRVSFG. The chain crosses the membrane as a helical span at residues 201 to 225; sequence IYFSIWIVINRVVMACVWNSTLAYI. Topologically, residues 226 to 259 are cytoplasmic; it reads GSQCVQLMLKAIFGTNLNTRIKDTIKNPNLTNFE. A helical membrane pass occupies residues 260–276; it reads FMCFMVFWVACLPFLWF. At 277-283 the chain is on the extracellular side; it reads PPDKLRH. A helical membrane pass occupies residues 284–305; it reads IFALKSAITPFAAFGFLIWTLC. Residues 306–367 lie on the Cytoplasmic side of the membrane; sequence KAKGHLALGS…KTYKSSVYSQ (62 aa). Residues 368–392 form a helical membrane-spanning segment; it reads LIALPVCYAIISLIGILSVSAAYTL. Over 393-416 the chain is Extracellular; the sequence is YGVNYWSPLDILNRYLDNYTSGNR. The chain crosses the membrane as a helical span at residues 417 to 435; sequence AGVFLISFIFAFDQLGANL. Residues 436-460 are Cytoplasmic-facing; it reads SGNSIPAGTDLTALLPKFINIRRGS. The chain crosses the membrane as a helical span at residues 461 to 477; sequence YICALISLAICPWDLLS. The Extracellular portion of the chain corresponds to 478–483; the sequence is SSSKFT. The helical transmembrane segment at 484–507 threads the bilayer; it reads TALAAYAVFLSAIAGVISADYFIV. At 508–537 the chain is on the cytoplasmic side; that stretch reads RKGYVNIFHCYTDKPGSYYMYNKYGTNWRA. The chain crosses the membrane as a helical span at residues 538–562; the sequence is VVAYIFGIAPNFAGFLGSVGVSVPI. At 563-572 the chain is on the extracellular side; sequence GAMKVYYLNY. A helical membrane pass occupies residues 573–590; that stretch reads FVGYLLAALSYCILVYFY. Topologically, residues 591–639 are cytoplasmic; the sequence is PIKGIPGDAKITDRKWLEEWVEVEEFGTEREAFEEYGGVSTGYEKIRYI. A Glycyl lysine isopeptide (Lys-Gly) (interchain with G-Cter in ubiquitin) cross-link involves residue Lys-635.

Belongs to the purine-cytosine permease (2.A.39) family.

Its subcellular location is the membrane. In terms of biological role, high-affinity transport of uridine. The polypeptide is Uridine permease (FUI1) (Saccharomyces cerevisiae (strain ATCC 204508 / S288c) (Baker's yeast)).